A 250-amino-acid chain; its full sequence is Testis-expressed protein 101 (250 aa).

An N-terminal signal peptide occupies residues 1-25; it reads MGACRIQYILLVFLLIASHWTLVQN. N45, N110, N134, and N160 each carry an N-linked (GlcNAc...) asparagine glycan. The UPAR/Ly6 domain occupies 141-215; it reads CPTCLALEPC…VKETCSYQSF (75 aa). A lipid anchor (GPI-anchor amidated glycine) is attached at G224. Residues 225 to 250 constitute a propeptide, removed in mature form; that stretch reads ASWMPTSLWVLELLLPALSLPLIYFP.

Interacts with VAMP3. Interacts with LY6K. Interacts with DPEP3; co-localized on the cell surface of spermatocytes, spermatids, and testicular spermatozoa, co-localized only in cytoplasmic droplets of caput and corpus epididymal sperm. Interacts with ADAM5. N-glycosylated; by high mannose and/or biantennary complex and/or certain types of hybrid oligosaccharides; possesses different oligosaccharides chains according to its subcellular localization in the testis. In terms of processing, sheds from membrane raft by ACE and released from the cell surface of epididymal sperm while it passes through the caput epididymis leading to disappearance of TEX101 on spermatozoa; is essential to produce fertile spermatozoa. In terms of tissue distribution, detected in testis.

The protein resides in the cell membrane. The protein localises to the membrane raft. Its subcellular location is the cytoplasmic vesicle. It is found in the secretory vesicle. It localises to the acrosome. The protein resides in the secreted. Its function is as follows. Plays a role in fertilization by controlling binding of sperm to zona pellucida and migration of spermatozoa into the oviduct. May play a role in signal transduction and promote protein tyrosine phosphorylation. The chain is Testis-expressed protein 101 from Rattus norvegicus (Rat).